A 516-amino-acid polypeptide reads, in one-letter code: D-alanine--D-alanyl carrier protein ligase (516 aa).

Position 156 to 157 (156 to 157 (TS)) interacts with ATP. A D-alanine-binding site is contributed by aspartate 203. Residue 298–303 (NAYGPT) participates in ATP binding. Valine 307 serves as a coordination point for D-alanine. ATP contacts are provided by residues aspartate 389, 401-404 (YGGR), and lysine 503. Lysine 503 lines the D-alanine pocket.

It belongs to the ATP-dependent AMP-binding enzyme family. DltA subfamily.

It localises to the cytoplasm. It catalyses the reaction holo-[D-alanyl-carrier protein] + D-alanine + ATP = D-alanyl-[D-alanyl-carrier protein] + AMP + diphosphate. It participates in cell wall biogenesis; lipoteichoic acid biosynthesis. Its function is as follows. Catalyzes the first step in the D-alanylation of lipoteichoic acid (LTA), the activation of D-alanine and its transfer onto the D-alanyl carrier protein (Dcp) DltC. In an ATP-dependent two-step reaction, forms a high energy D-alanyl-AMP intermediate, followed by transfer of the D-alanyl residue as a thiol ester to the phosphopantheinyl prosthetic group of the Dcp. D-alanylation of LTA plays an important role in modulating the properties of the cell wall in Gram-positive bacteria, influencing the net charge of the cell wall. In Streptococcus pneumoniae (strain ATCC 700669 / Spain 23F-1), this protein is D-alanine--D-alanyl carrier protein ligase.